Consider the following 236-residue polypeptide: Uridylate kinase (236 aa).

9-12 (KISG) contacts ATP. G51 contributes to the UMP binding site. Residues G52 and R56 each coordinate ATP. UMP-binding positions include D71 and 132-139 (TGNSHFTT). Residues Y166 and D169 each contribute to the ATP site.

The protein belongs to the UMP kinase family. In terms of assembly, homohexamer.

The protein localises to the cytoplasm. It catalyses the reaction UMP + ATP = UDP + ADP. The protein operates within pyrimidine metabolism; CTP biosynthesis via de novo pathway; UDP from UMP (UMPK route): step 1/1. Its activity is regulated as follows. Inhibited by UTP. Catalyzes the reversible phosphorylation of UMP to UDP. This Mycoplasmoides gallisepticum (strain R(low / passage 15 / clone 2)) (Mycoplasma gallisepticum) protein is Uridylate kinase.